The following is a 509-amino-acid chain: MTALVSPAGPEQPSLRVRRLLLHTQHQPVVVMHTDCHVCRSEGLAARSQVLLTNGARQVHATLFQVDGDAVLSHDEVGLSETAWDLLGVAEGDEVRVSHPPALESLASVRRRIYGHRLDAQALSEIVRDVAAGRYTDVHLAAFLTASAALPLDENETADLTGAMIAVGDRMEWDAPTVVDKHCVGGLPGNRTTPIVVAIVAANGLVMPKTSSRAITSPAGTADTMETLAPVDLDLATLRRVVEAEGGCIAWGGAVHLSPADDIFVRVERELDVDTEGQLIASVLSKKISAGSTHVVIDIPVGPTAKVRGEDAASHLASRITAVASRFGLAATCVQTDGSQPVGRGIGPALEAFDVLAVLQNASDAPDDLRRRAATLAGAALEIGRKAGKGEGTALALETLADGRAWKKFEAICEAQGGLRAPPRAAHVHPLVAPRAGRVVHINNRKLSRLAKLAGAPESKAGGVHMDVRLGDEIDRGQPLLHVHAETTGELAYALDYAARAGDIVEIEA.

The protein belongs to the thymidine/pyrimidine-nucleoside phosphorylase family. Type 2 subfamily.

The catalysed reaction is thymidine + phosphate = 2-deoxy-alpha-D-ribose 1-phosphate + thymine. This is Putative thymidine phosphorylase from Chelativorans sp. (strain BNC1).